The primary structure comprises 1101 residues: Helicase POLQ-like (1101 aa).

Positions 212 to 261 (DLGDHSMKERDWKSSSHNTVNEELPHNCIEQPQQNDESSSKVRTSSDMNR) are disordered. A compositionally biased stretch (basic and acidic residues) spans 213 to 225 (LGDHSMKERDWKS). Residues 241–258 (EQPQQNDESSSKVRTSSD) are compositionally biased toward polar residues. The Helicase ATP-binding domain maps to 346 to 518 (LNSVQERKNL…FLQAEYYTSQ (173 aa)). 359–366 (LPTSGGKT) serves as a coordination point for ATP. The DEAH box signature appears at 463-466 (DELH). One can recognise a Helicase C-terminal domain in the interval 566 to 758 (HLVALVTEVI…EFTKGIQTLF (193 aa)).

This sequence belongs to the helicase family. SKI2 subfamily. In terms of assembly, homodimer. Interacts with POLN. Interacts with RAD51B and RAD51C; promoting association with the BCDX2 complex. Interacts with the replication protein A (RPA/RP-A) complex. Interacts with RAD51; stimulating HELQ DNA helicase activity and ability to unwing DNA.

It is found in the nucleus. It localises to the chromosome. It carries out the reaction Couples ATP hydrolysis with the unwinding of duplex DNA by translocating in the 3'-5' direction.. It catalyses the reaction ATP + H2O = ADP + phosphate + H(+). ATPase activity is strongly stimulated by single-stranded DNA. Presence of ATP and Mg cofactor are required for helicase activity allowing to unwind duplex oligonucleotides up to 60-70-mer. This helicase activity is stimulated by replication protein A (RPA/RP-A) complex that binds to unwound regions and inhibits re-annealing. Its function is as follows. Single-stranded 3'-5' DNA helicase that plays a key role in homology-driven double-strand break (DSB) repair. Involved in different DSB repair mechanisms that are guided by annealing of extensive stretches of complementary bases at break ends, such as microhomology-mediated end-joining (MMEJ), single-strand annealing (SSA) or synthesis-dependent strand annealing (SDSA). Possesses both DNA unwinding and annealing activities. Forms a complex with RAD51, stimulating HELQ DNA helicase activity and ability to unwing DNA. Efficiently unwinds substrates containing 3' overhangs or a D-loop. In contrast, interaction with the replication protein A (RPA/RP-A) complex inhibits DNA unwinding by HELQ but strongly stimulates DNA strand annealing. Triggers displacement of RPA from single-stranded DNA to facilitate annealing of complementary sequences. This Homo sapiens (Human) protein is Helicase POLQ-like.